A 132-amino-acid polypeptide reads, in one-letter code: Small ribosomal subunit protein uS8 (132 aa).

It belongs to the universal ribosomal protein uS8 family. In terms of assembly, part of the 30S ribosomal subunit. Contacts proteins S5 and S12.

Functionally, one of the primary rRNA binding proteins, it binds directly to 16S rRNA central domain where it helps coordinate assembly of the platform of the 30S subunit. The polypeptide is Small ribosomal subunit protein uS8 (Levilactobacillus brevis (strain ATCC 367 / BCRC 12310 / CIP 105137 / JCM 1170 / LMG 11437 / NCIMB 947 / NCTC 947) (Lactobacillus brevis)).